A 55-amino-acid chain; its full sequence is Large ribosomal subunit protein bL33 (55 aa).

The protein belongs to the bacterial ribosomal protein bL33 family.

In Hyphomonas neptunium (strain ATCC 15444), this protein is Large ribosomal subunit protein bL33.